The primary structure comprises 201 residues: Small ribosomal subunit protein uS4c (201 aa).

Residues 89-152 (MRLDNILFRL…NSRTLVQNLL (64 aa)) enclose the S4 RNA-binding domain.

Belongs to the universal ribosomal protein uS4 family. Part of the 30S ribosomal subunit. Contacts protein S5. The interaction surface between S4 and S5 is involved in control of translational fidelity.

The protein resides in the plastid. It localises to the chloroplast. Its function is as follows. One of the primary rRNA binding proteins, it binds directly to 16S rRNA where it nucleates assembly of the body of the 30S subunit. In terms of biological role, with S5 and S12 plays an important role in translational accuracy. This chain is Small ribosomal subunit protein uS4c (rps4), found in Capsella bursa-pastoris (Shepherd's purse).